The chain runs to 122 residues: Large ribosomal subunit protein uL14 (122 aa).

The protein belongs to the universal ribosomal protein uL14 family. As to quaternary structure, part of the 50S ribosomal subunit. Forms a cluster with proteins L3 and L19. In the 70S ribosome, L14 and L19 interact and together make contacts with the 16S rRNA in bridges B5 and B8.

Its function is as follows. Binds to 23S rRNA. Forms part of two intersubunit bridges in the 70S ribosome. This is Large ribosomal subunit protein uL14 from Gluconobacter oxydans (strain 621H) (Gluconobacter suboxydans).